Reading from the N-terminus, the 197-residue chain is Carbohydrate-binding domain-containing protein C2E1P3.05c (197 aa).

Residues 1-23 (MLTQSLFLTVLTLALSLVSKTSA) form the signal peptide. CBM1 domains are found at residues 25–61 (QCSP…SQCI) and 68–104 (PCAK…SQCI). Disulfide bonds link Cys-33-Cys-50, Cys-44-Cys-60, Cys-76-Cys-93, and Cys-87-Cys-103. Positions 115 to 163 (SSAASSTTSTTSSSSLVSSTTLTSSSPSAVSSTTSIPSISSTISSSVST) are disordered. 2 N-linked (GlcNAc...) asparagine glycosylation sites follow: Asn-182 and Asn-193.

It localises to the secreted. This Schizosaccharomyces pombe (strain 972 / ATCC 24843) (Fission yeast) protein is Carbohydrate-binding domain-containing protein C2E1P3.05c.